The chain runs to 494 residues: 3-octaprenyl-4-hydroxybenzoate carboxy-lyase (494 aa).

Residue N172 coordinates Mn(2+). Prenylated FMN-binding positions include I175–R177, R189–L191, and R194–G195. E238 contributes to the Mn(2+) binding site. Residue D294 is the Proton donor of the active site.

It belongs to the UbiD family. As to quaternary structure, homohexamer. Prenylated FMN is required as a cofactor. Requires Mn(2+) as cofactor.

It is found in the cell membrane. The enzyme catalyses a 4-hydroxy-3-(all-trans-polyprenyl)benzoate + H(+) = a 2-(all-trans-polyprenyl)phenol + CO2. Its pathway is cofactor biosynthesis; ubiquinone biosynthesis. Its function is as follows. Catalyzes the decarboxylation of 3-octaprenyl-4-hydroxy benzoate to 2-octaprenylphenol, an intermediate step in ubiquinone biosynthesis. This chain is 3-octaprenyl-4-hydroxybenzoate carboxy-lyase, found in Janthinobacterium sp. (strain Marseille) (Minibacterium massiliensis).